We begin with the raw amino-acid sequence, 250 residues long: Probable syntaxin-8B (250 aa).

At 1–213 (MGDYWLNEHD…NRRMETIKQN (213 aa)) the chain is on the cytoplasmic side. A coiled-coil region spans residues 73 to 100 (EKELLRRKNKVESLISMKNQLNSTLDAA). The t-SNARE coiled-coil homology domain maps to 148 to 210 (QHIMREQDES…RNANRRMETI (63 aa)). The chain crosses the membrane as a helical; Anchor for type IV membrane protein span at residues 214–234 (AGSTCMIVCIVILIILIVVLI). Residues 235–250 (ATDSGCKIYNDPKHCP) lie on the Vesicular side of the membrane.

This sequence belongs to the syntaxin family.

It localises to the membrane. This Dictyostelium discoideum (Social amoeba) protein is Probable syntaxin-8B (syn8B).